The chain runs to 529 residues: Phosphoenolpyruvate carboxykinase (ATP) (529 aa).

Residue arginine 52 participates in substrate binding. Residues arginine 130, asparagine 131, and phenylalanine 133 each contribute to the Ca(2+) site. Positions 191 and 197 each coordinate substrate. ATP contacts are provided by residues lysine 197, histidine 216, and 232 to 240; that span reads GLSGTGKTT. The Mn(2+) site is built by lysine 197 and histidine 216. Mn(2+) is bound at residue aspartate 253. Glycine 267 contacts Ca(2+). ATP is bound by residues glutamate 281, arginine 319, 438–439, phenylalanine 439, and threonine 444; that span reads RF. Arginine 319 is a binding site for substrate.

Belongs to the phosphoenolpyruvate carboxykinase (ATP) family. In terms of assembly, dimer of dimers. The cofactor is Mn(2+).

The protein resides in the cytoplasm. It carries out the reaction oxaloacetate + ATP = phosphoenolpyruvate + ADP + CO2. Its pathway is carbohydrate biosynthesis; gluconeogenesis. With respect to regulation, allosterically activated by calcium. In terms of biological role, involved in gluconeogenesis. Catalyzes the conversion of oxaloacetate (OAA) to phosphoenolpyruvate (PEP) through direct phosphoryl transfer between the nucleoside triphosphate and OAA. The polypeptide is Phosphoenolpyruvate carboxykinase (ATP) (Thermus thermophilus (strain ATCC 27634 / DSM 579 / HB8)).